Reading from the N-terminus, the 85-residue chain is UPF0297 protein CPR_1749 (85 aa).

Belongs to the UPF0297 family.

This is UPF0297 protein CPR_1749 from Clostridium perfringens (strain SM101 / Type A).